The sequence spans 329 residues: Alpha-tubulin N-acetyltransferase 1 (329 aa).

An N-acetyltransferase domain is found at 5-185 (SQVALLPKLS…NNFVVFHRYF (181 aa)). Acetyl-CoA-binding positions include 119 to 132 (FFVDTSFQRKGFGK) and 155 to 164 (SVKFLAFLQK). Disordered stretches follow at residues 218 to 261 (PKYQ…GVGK) and 306 to 329 (GARRRMSPTRSGVQYNIISGTPEH). Over residues 220–229 (YQSTTGPNNN) the composition is skewed to polar residues. Over residues 238–249 (TPPPPPLPPPLV) the composition is skewed to pro residues. Over residues 313-329 (PTRSGVQYNIISGTPEH) the composition is skewed to polar residues.

It belongs to the acetyltransferase ATAT1 family.

It carries out the reaction L-lysyl-[alpha-tubulin] + acetyl-CoA = N(6)-acetyl-L-lysyl-[alpha-tubulin] + CoA + H(+). In terms of biological role, specifically acetylates 'Lys-40' in alpha-tubulin on the lumenal side of microtubules. Promotes microtubule destabilization and accelerates microtubule dynamics; this activity may be independent of acetylation activity. Acetylates alpha-tubulin with a slow enzymatic rate, due to a catalytic site that is not optimized for acetyl transfer. Enters the microtubule through each end and diffuses quickly throughout the lumen of microtubules. Acetylates only long/old microtubules because of its slow acetylation rate since it does not have time to act on dynamically unstable microtubules before the enzyme is released. The sequence is that of Alpha-tubulin N-acetyltransferase 1 from Trypanosoma cruzi (strain CL Brener).